Here is a 62-residue protein sequence, read N- to C-terminus: Venom protein 51.1 (62 aa).

Residues 1–25 form the signal peptide; that stretch reads MKFFGILLIVTMVVLVMIATTYVES. 3 cysteine pairs are disulfide-bonded: Cys-32-Cys-53, Cys-39-Cys-58, and Cys-43-Cys-60.

Expressed by the venom gland.

Its subcellular location is the secreted. Neurotoxin. Decreases the action potential of myelinated nerves in mice and frogs. The chain is Venom protein 51.1 from Lychas mucronatus (Chinese swimming scorpion).